Here is a 576-residue protein sequence, read N- to C-terminus: Rop guanine nucleotide exchange factor 13 (576 aa).

Residues 119 to 485 (KSCYFAYVTE…QLTQNPELAM (367 aa)) enclose the PRONE domain. Polar residues predominate over residues 557–570 (KTTYLESLGTTRSP). Residues 557 to 576 (KTTYLESLGTTRSPTAGRYS) are disordered.

As to quaternary structure, interacts with PRK6. In terms of tissue distribution, specifically expressed in mature flowers.

Guanine-nucleotide exchange factor (GEF) that acts as an activator of Rop (Rho of plants) GTPases by promoting the exchange of GDP for GTP. The protein is Rop guanine nucleotide exchange factor 13 of Arabidopsis thaliana (Mouse-ear cress).